Reading from the N-terminus, the 963-residue chain is Spliceosome associated factor 3, U4/U6 recycling protein (963 aa).

Positions 1 to 11 are enriched in low complexity; that stretch reads MATAAATSASE. Disordered stretches follow at residues 1-36 and 49-86; these read MATA…RTRR and KTMG…YEWE. A2 carries the post-translational modification N-acetylalanine. A mediates interaction with PRPF3 region spans residues 2–351; that stretch reads ATAAATSASE…LVPDLWIRYS (350 aa). Phosphoserine is present on residues S10 and S16. Positions 14-23 are enriched in basic and acidic residues; that stretch reads AESKAGPKAD. Residues 21–46 are a coiled coil; the sequence is KADGEEDEVKAARTRRKVLSRAVAAA. The segment covering 57–69 has biased composition (acidic residues); it reads QQEEGVSESDGDE. A coiled-coil region spans residues 82–110; sequence EYEWEYDEEEEKNQLEIERLEEQLSINVY. HAT repeat units lie at residues 126–158, 164–195, 201–237, 242–275, 324–356, 359–391, 394–430, and 487–520; these read GELT…DEIS, LDRE…YSVG, GGLE…FESA, ARLE…WSED, GDPA…YLDR, KVKD…AMER, VDHQ…YLRR, and NNMQ…LERA. Residue S215 is modified to Phosphoserine. The segment at 487-520 is required for interaction with USP4; it reads NNMQKARELWDSIMTRGNAKYANMWLEYYNLERA. The tract at residues 537-953 is necessary and sufficient for U6 snRNA binding; the sequence is CTSDYPEHVC…AATEAPKMSN (417 aa). Positions 559–619 form a coiled coil; that stretch reads LEDWDIAVQK…ALKKKKKIRG (61 aa). The interval 600-670 is required for nuclear localization; that stretch reads QRKRARAEKK…EVAPGPAGKC (71 aa). Residues 601 to 608 carry the Nuclear localization signal motif; the sequence is RKRARAEK. Residues 608–619 are compositionally biased toward basic and acidic residues; it reads KKALKKKKKIRG. The disordered stretch occupies residues 608 to 712; the sequence is KKALKKKKKI…SITVFVSNLP (105 aa). The segment covering 620–635 has biased composition (basic residues); it reads PEKRGADEDDEKEWGD. Positions 644–657 are enriched in acidic residues; sequence RRRVENSIPAAGET. The residue at position 650 (S650) is a Phosphoserine. At T657 the chain carries Phosphothreonine. The span at 695–712 shows a compositional bias: basic and acidic residues; it reads VLHDSSKDSITVFVSNLP. The RRM 1 domain maps to 704–782; that stretch reads ITVFVSNLPY…RPMFVSPCVD (79 aa). Residues S769, S795, and S852 each carry the phosphoserine modification. The RRM 2 domain occupies 801 to 878; the sequence is HKLFISGLPF…NVIKVAISNP (78 aa). Over residues 900-909 the composition is skewed to basic and acidic residues; the sequence is PQTYGARGKG. R906 is modified (omega-N-methylarginine).

Component of the 7SK snRNP complex at least composed of P-TEFb (composed of CDK9 and CCNT1/cyclin-T1), HEXIM1, HEXIM2, BCDIN3, SART3 proteins and 7SK and U6 snRNAs. Interacts with AGO1 and AGO2. Interacts with PRPF3 and USP4; the interaction with PRPF3 is direct and recruits USP4 to its substrate PRPF3. Interacts with USP15; the interaction is direct.

The protein resides in the nucleus. The protein localises to the nucleoplasm. It is found in the cajal body. It localises to the nucleus speckle. Its subcellular location is the cytoplasm. U6 snRNP-binding protein that functions as a recycling factor of the splicing machinery. Promotes the initial reassembly of U4 and U6 snRNPs following their ejection from the spliceosome during its maturation. Also binds U6atac snRNPs and may function as a recycling factor for U4atac/U6atac spliceosomal snRNP, an initial step in the assembly of U12-type spliceosomal complex. The U12-type spliceosomal complex plays a role in the splicing of introns with non-canonical splice sites. May also function as a substrate-targeting factor for deubiquitinases like USP4 and USP15. Recruits USP4 to ubiquitinated PRPF3 within the U4/U5/U6 tri-snRNP complex, promoting PRPF3 deubiquitination and thereby regulating the spliceosome U4/U5/U6 tri-snRNP spliceosomal complex disassembly. May also recruit the deubiquitinase USP15 to histone H2B and mediate histone deubiquitination, thereby regulating gene expression and/or DNA repair. May play a role in hematopoiesis probably through transcription regulation of specific genes including MYC. The polypeptide is Spliceosome associated factor 3, U4/U6 recycling protein (Pongo abelii (Sumatran orangutan)).